The primary structure comprises 123 residues: WAP four-disulfide core domain protein 2 (123 aa).

The signal sequence occupies residues 1–28 (MPASRLVPLGAVLLLGLLLLLELPPVTG). WAP domains follow at residues 30–71 (GADK…SAIC) and 74–122 (PNEK…VTPN). Cystine bridges form between Cys37–Cys63, Cys46–Cys67, Cys50–Cys62, Cys56–Cys71, Cys81–Cys109, Cys92–Cys113, Cys96–Cys108, and Cys102–Cys118. Asn45 carries N-linked (GlcNAc...) asparagine glycosylation.

In terms of assembly, homotrimer; disulfide-linked. Epididymis.

The protein localises to the secreted. In terms of biological role, broad range protease inhibitor. This Oryctolagus cuniculus (Rabbit) protein is WAP four-disulfide core domain protein 2 (WFDC2).